Consider the following 388-residue polypeptide: Chorismate synthase (388 aa).

Residues arginine 39 and arginine 45 each contribute to the NADP(+) site. Residues 130-132, 251-252, glycine 296, 311-315, and arginine 337 each bind FMN; these read RSS, NA, and KPIPT.

The protein belongs to the chorismate synthase family. Homotetramer. FMNH2 is required as a cofactor.

It carries out the reaction 5-O-(1-carboxyvinyl)-3-phosphoshikimate = chorismate + phosphate. The protein operates within metabolic intermediate biosynthesis; chorismate biosynthesis; chorismate from D-erythrose 4-phosphate and phosphoenolpyruvate: step 7/7. Functionally, catalyzes the anti-1,4-elimination of the C-3 phosphate and the C-6 proR hydrogen from 5-enolpyruvylshikimate-3-phosphate (EPSP) to yield chorismate, which is the branch point compound that serves as the starting substrate for the three terminal pathways of aromatic amino acid biosynthesis. This reaction introduces a second double bond into the aromatic ring system. This Streptococcus pyogenes serotype M1 protein is Chorismate synthase.